Consider the following 333-residue polypeptide: Glycerol-3-phosphate dehydrogenase [NAD(P)+] (333 aa).

Residues W11, R30, and K105 each contribute to the NADPH site. Positions 105, 133, and 135 each coordinate sn-glycerol 3-phosphate. A137 contacts NADPH. Sn-glycerol 3-phosphate-binding residues include K188, D241, S251, R252, and N253. The active-site Proton acceptor is the K188. R252 is a binding site for NADPH. Residues V276 and E278 each coordinate NADPH.

This sequence belongs to the NAD-dependent glycerol-3-phosphate dehydrogenase family.

It localises to the cytoplasm. It catalyses the reaction sn-glycerol 3-phosphate + NAD(+) = dihydroxyacetone phosphate + NADH + H(+). The enzyme catalyses sn-glycerol 3-phosphate + NADP(+) = dihydroxyacetone phosphate + NADPH + H(+). It participates in membrane lipid metabolism; glycerophospholipid metabolism. Its function is as follows. Catalyzes the reduction of the glycolytic intermediate dihydroxyacetone phosphate (DHAP) to sn-glycerol 3-phosphate (G3P), the key precursor for phospholipid synthesis. This is Glycerol-3-phosphate dehydrogenase [NAD(P)+] from Methylibium petroleiphilum (strain ATCC BAA-1232 / LMG 22953 / PM1).